The chain runs to 373 residues: WAT1-related protein At4g08300 (373 aa).

10 helical membrane passes run 11–31 (PIIA…ITMV), 41–61 (ILAT…ALIL), 67–87 (PKMT…EPLL), 102–122 (TYSS…AVIF), 139–159 (IGTA…GPAI), 185–205 (WVTG…FFIL), 219–239 (LVMW…LIMV), 255–275 (AAVY…SIVI), 281–301 (VFTT…GVLV), and 306–326 (IHLG…SVVW). EamA domains are found at residues 23–151 (AGMY…AMVM) and 198–325 (TWAG…YSVV).

Belongs to the drug/metabolite transporter (DMT) superfamily. Plant drug/metabolite exporter (P-DME) (TC 2.A.7.4) family.

The protein resides in the membrane. This Arabidopsis thaliana (Mouse-ear cress) protein is WAT1-related protein At4g08300.